An 803-amino-acid chain; its full sequence is Zinc finger and BTB domain-containing protein 17 (803 aa).

The region spanning 1-104 (MDFPQHSQHV…VATFLQMQDI (104 aa)) is the BTB domain. The interval 116–295 (EPATSPGGNA…GLRSGTYGDR (180 aa)) is disordered. Position 120 is a phosphoserine (serine 120). Over residues 132 to 142 (GGDKRAKEEKV) the composition is skewed to basic and acidic residues. Composition is skewed to low complexity over residues 171 to 180 (GQAQSAASGA) and 206 to 217 (AAAEAEAALSES). Acidic residues-rich tracts occupy residues 233 to 244 (EQKEQEEQEEEG) and 261 to 272 (EAPEENENEESA). The interval 269-308 (EESAGTDSGQELGSEARGLRSGTYGDRTESKAYGSVIHKC) is interaction with MYC. C2H2-type zinc fingers lie at residues 306–328 (HKCEDCGKEFTHTGNFKRHIRIH), 334–356 (FSCRECSKAFSDPAACKAHEKTH), 362–384 (YGCEECGKSYRLISLLNLHKKRH), 390–412 (YRCEDCGKLFTTSGNLKRHQLVH), 418–440 (YQCDYCGRSFSDPTSKMRHLETH), 446–468 (HKCPHCDKKFNQVGNLKAHLKIH), 474–496 (LKCRECGKQFTTSGNLKRHLRIH), 502–524 (YVCIHCQRQFADPGALQRHVRIH), 530–552 (CQCVMCGKAFTQASSLIAHVRQH), 558–580 (YVCERCGKRFVQSSQLANHIRHH), 586–608 (HKCSVCSKAFVNVGDLSKHIIIH), 614–637 (YLCDKCGRGFNRVDNLRSHVKTVH), and 717–739 (YACDSCGDKFLDANSLAQHVRIH). Lysine 397 is covalently cross-linked (Glycyl lysine isopeptide (Lys-Gly) (interchain with G-Cter in ubiquitin)). A Glycyl lysine isopeptide (Lys-Gly) (interchain with G-Cter in ubiquitin) cross-link involves residue lysine 481. Residues 637–718 (HQGKAGIKIL…EDPNTHILYA (82 aa)) are interaction with MYC. The interaction with HCFC1 stretch occupies residues 637–803 (HQGKAGIKIL…TAPECPPPAE (167 aa)). Positions 779 to 803 (RDGAEGQPALAETSPTAPECPPPAE) are disordered.

The protein belongs to the krueppel C2H2-type zinc-finger protein family. In terms of assembly, homooligomerizes (via the BTB/POZ domain), multimerization is required for DNA binding. Interacts (via the C-terminal zinc fingers) with GIF1; the interaction results in the recruitment of MYB to the CDKN1A/p21 and CDKN1B promoters and repression of transcription. Interacts with TRAF2, interfering with the binding of UBC13 to TRAF2, and inhibiting TRAF2 E3 ligase activity. Interacts with MYC (via the C-terminal helix-loop-helix motif); the interaction inhibits ZBTB17 transactivation and growth arrest activities and renders it insoluble in the nucleus. Also interacts with HCFC1, MAGEA4 and TMPRSS11A. Interacts with BCL6; the interaction inhibits ZBTB17 transactivation activity on target genes involved in cell cycle arrest. Interacts with ZBTB49 isoform 3/ZNF509S1; this interaction blocks ZBTB17-mediated repression of RB1. Undergoes 'Lys-48'-linked polyubiquitination at Lys-397 and Lys-481 and subsequent proteasomal degradation in a TRAF2-dependent manner. As to expression, expressed in germinal center B-cells.

The protein localises to the nucleus. Its function is as follows. Transcription factor that can function as an activator or repressor depending on its binding partners, and by targeting negative regulators of cell cycle progression. Plays a critical role in early lymphocyte development, where it is essential to prevent apoptosis in lymphoid precursors, allowing them to survive in response to IL7 and undergo proper lineage commitment. Has been shown to bind to the promoters of adenovirus major late protein and cyclin D1 and activate transcription. Required for early embryonic development during gastrulation. Represses RB1 transcription; this repression can be blocked by interaction with ZBTB49 isoform 3/ZNF509S1. The polypeptide is Zinc finger and BTB domain-containing protein 17 (ZBTB17) (Homo sapiens (Human)).